Reading from the N-terminus, the 230-residue chain is MSNVVPTPVSPLFAQPFATRLERALQHLRIGRPVILMDDFDRENEADLIVAADKLTVPVMAQLIRDGSGIVCLCLPGETLDRLELPPMVDSNRSRYSTAFTVSIEAREGVTTGVSAVDRVTTIRAAIAPGARSGDVVSPGHVFPLRAQPGGVLTRRGHTEGSVDLAALAGLRPAGVLCELMNADGTMMRGASLERYAAKEGLVALAIDELAAHLQARGATGAPAELAVAA.

D-ribulose 5-phosphate is bound by residues R42–E43, D47, R155–T159, and E179. E43 contacts Mg(2+). Position 158 (H158) interacts with Mg(2+).

Belongs to the DHBP synthase family. In terms of assembly, homodimer. Requires Mg(2+) as cofactor. Mn(2+) is required as a cofactor.

The enzyme catalyses D-ribulose 5-phosphate = (2S)-2-hydroxy-3-oxobutyl phosphate + formate + H(+). It participates in cofactor biosynthesis; riboflavin biosynthesis; 2-hydroxy-3-oxobutyl phosphate from D-ribulose 5-phosphate: step 1/1. Its function is as follows. Catalyzes the conversion of D-ribulose 5-phosphate to formate and 3,4-dihydroxy-2-butanone 4-phosphate. The sequence is that of 3,4-dihydroxy-2-butanone 4-phosphate synthase from Bordetella bronchiseptica (strain ATCC BAA-588 / NCTC 13252 / RB50) (Alcaligenes bronchisepticus).